Reading from the N-terminus, the 487-residue chain is 2-aminomuconic semialdehyde dehydrogenase (487 aa).

NAD(+) is bound at residue 231-236 (GSQPTA). The active-site Proton acceptor is Glu253. Catalysis depends on Cys287, which acts as the Nucleophile.

This sequence belongs to the aldehyde dehydrogenase family.

It is found in the cytoplasm. It carries out the reaction 2-aminomuconate 6-semialdehyde + NAD(+) + H2O = (2Z,4E)-2-aminomuconate + NADH + 2 H(+). It participates in amino-acid degradation; L-kynurenine degradation. Its function is as follows. Catalyzes the NAD-dependent oxidation of 2-aminomuconic semialdehyde of the kynurenine metabolic pathway in L-tryptophan degradation. This Bos taurus (Bovine) protein is 2-aminomuconic semialdehyde dehydrogenase (ALDH8A1).